The chain runs to 860 residues: Protein argonaute-2 (860 aa).

A 3'-nitrotyrosine modification is found at tyrosine 2. Residues 230 to 349 form the PAZ domain; sequence PVIEFVCEVL…LPLEVCNIVA (120 aa). An interaction with guide RNA region spans residues 312-317; that stretch reads YFKDRH. The residue at position 388 (serine 388) is a Phosphoserine. A Piwi domain is found at 518–819; that stretch reads LVVVILPGKT…VAFRARYHLV (302 aa). Residues 525 to 567 are interaction with guide RNA; it reads GKTPVYAEVKRVGDTVLGMATQCVQMKNVQRTTPQTLSNLCLK. Positions 588–591 are interaction with GW182 family members; the sequence is FQQP. Aspartate 598 contacts a divalent metal cation. Residues 651–661 form an interaction with GW182 family members region; it reads LIQFYKSTRFK. A divalent metal cation is bound at residue aspartate 670. A 4-hydroxyproline modification is found at proline 701. Interaction with guide RNA stretches follow at residues 710 to 711, 754 to 762, and 791 to 813; these read KR, HAGIQGTSR, and YVRC…VAFR. An a divalent metal cation-binding site is contributed by histidine 808. Serine 825, serine 829, serine 832, and serine 835 each carry phosphoserine.

Belongs to the argonaute family. Ago subfamily. As to quaternary structure, interacts with DICER1 through its Piwi domain and with TARBP2 during assembly of the RNA-induced silencing complex (RISC). Together, DICER1, AGO2 and TARBP2 constitute the trimeric RISC loading complex (RLC), or micro-RNA (miRNA) loading complex (miRLC). Within the RLC/miRLC, DICER1 and TARBP2 are required to process precursor miRNAs (pre-miRNAs) to mature miRNAs and then load them onto AGO2. AGO2 bound to the mature miRNA constitutes the minimal RISC and may subsequently dissociate from DICER1 and TARBP2. Note however that the term RISC has also been used to describe the trimeric RLC/miRLC. The formation of RISC complexes containing siRNAs rather than miRNAs appears to occur independently of DICER1. Interacts with AGO1. Also interacts with DDB1, DDX5, DDX6, DDX20, DHX30, DHX36, DDX47, DHX9, ELAVL, FXR1, GEMIN4, HNRNPF, IGF2BP1, ILF3, IMP8, MATR3, PABPC1, PRMT5, P4HA1, P4HB, RBM4, SART3, TNRC6A, TNRC6B, UPF1 and YBX1. Interacts with the P-body components DCP1A and XRN1. Associates with polysomes and messenger ribonucleoproteins (mNRPs). Interacts with RBM4; the interaction is modulated under stress-induced conditions, occurs under both cell proliferation and differentiation conditions and in an RNA- and phosphorylation-independent manner. Interacts with LIMD1, WTIP and AJUBA. Interacts with TRIM71. Interacts with APOBEC3G in an RNA-dependent manner. Interacts with APOBEC3A, APOBEC3C, APOBEC3F and APOBEC3H. Interacts with DICER1, TARBP2, EIF6, MOV10 and RPL7A (60S ribosome subunit); they form a large RNA-induced silencing complex (RISC). Interacts with FMR1. Interacts with ZFP36. Interacts with RC3H1; the interaction is RNA independent. Interacts with ARB2A. Found in a complex composed of AGO2, CHD7 and ARB2A. Interacts with SND1 and SYT11. Interacts with CLNK. Interacts with GARRE1. Interacts with GRB2; this interaction is important for the formation of a ternary complex containing GRB2, AGO2 and DICER1. Mg(2+) is required as a cofactor. It depends on Mn(2+) as a cofactor. In terms of processing, hydroxylated. 4-hydroxylation appears to enhance protein stability but is not required for miRNA-binding or endonuclease activity. Ubiquitinated on surface-exposed lysines by a SCF-like E3 ubiquitin-protein ligase complex containing ZSWIM8 during target-directed microRNA degradation (TDMD), a process that mediates degradation of microRNAs (miRNAs). Ubiquitination by the SCF-like E3 ubiquitin-protein ligase complex containing ZSWIM8 leads to its subsequent degradation, thereby exposing miRNAs for degradation. ZSWIM8 recognizes and binds AGO2 when it is engaged with a TDMD target. Post-translationally, phosphorylation at Ser-388 by AKT3; leads to up-regulate translational repression of microRNA target and down-regulate endonucleolytic cleavage. In terms of processing, a phosphorylation cycle of C-terminal serine cluster (Ser-825-Ser-835) regulates the release of target mRNAs. Target-binding leads to phosphorylation of these residues by CSNK1A1, which reduces the affinity of AGO2 for mRNA and enables target release. The ANKRD52-PPP6C phosphatase complex dephosphorylates the residues, which primes AGO2 for binding a new target. Ubiquitous expression in 9.5 day embryos with highest levels in forebrain, heart, limb buds, and branchial arches.

The protein resides in the cytoplasm. The protein localises to the P-body. It is found in the nucleus. It carries out the reaction Endonucleolytic cleavage to 5'-phosphomonoester.. Functionally, required for RNA-mediated gene silencing (RNAi) by the RNA-induced silencing complex (RISC). The 'minimal RISC' appears to include AGO2 bound to a short guide RNA such as a microRNA (miRNA) or short interfering RNA (siRNA). These guide RNAs direct RISC to complementary mRNAs that are targets for RISC-mediated gene silencing. The precise mechanism of gene silencing depends on the degree of complementarity between the miRNA or siRNA and its target. Binding of RISC to a perfectly complementary mRNA generally results in silencing due to endonucleolytic cleavage of the mRNA specifically by AGO2. Binding of RISC to a partially complementary mRNA results in silencing through inhibition of translation, and this is independent of endonuclease activity. May inhibit translation initiation by binding to the 7-methylguanosine cap, thereby preventing the recruitment of the translation initiation factor eIF4-E. May also inhibit translation initiation via interaction with EIF6, which itself binds to the 60S ribosomal subunit and prevents its association with the 40S ribosomal subunit. The inhibition of translational initiation leads to the accumulation of the affected mRNA in cytoplasmic processing bodies (P-bodies), where mRNA degradation may subsequently occur. In some cases RISC-mediated translational repression is also observed for miRNAs that perfectly match the 3' untranslated region (3'-UTR). Can also up-regulate the translation of specific mRNAs under certain growth conditions. Binds to the AU element of the 3'-UTR of the TNF (TNF-alpha) mRNA and up-regulates translation under conditions of serum starvation. Also required for transcriptional gene silencing (TGS), in which short RNAs known as antigene RNAs or agRNAs direct the transcriptional repression of complementary promoter regions. Regulates lymphoid and erythroid development and function, and this is independent of endonuclease activity. The sequence is that of Protein argonaute-2 (Ago2) from Mus musculus (Mouse).